Here is a 362-residue protein sequence, read N- to C-terminus: Glutamate 5-kinase (362 aa).

Lys3 serves as a coordination point for ATP. Substrate-binding residues include Ser43, Asp128, and Asn140. ATP-binding positions include 160-161 (TD) and 202-208 (TGGMRTK). The PUA domain occupies 267 to 348 (AGAILIDDGA…REIENVLGYS (82 aa)).

Belongs to the glutamate 5-kinase family.

Its subcellular location is the cytoplasm. The enzyme catalyses L-glutamate + ATP = L-glutamyl 5-phosphate + ADP. It functions in the pathway amino-acid biosynthesis; L-proline biosynthesis; L-glutamate 5-semialdehyde from L-glutamate: step 1/2. Functionally, catalyzes the transfer of a phosphate group to glutamate to form L-glutamate 5-phosphate. In Xanthomonas euvesicatoria pv. vesicatoria (strain 85-10) (Xanthomonas campestris pv. vesicatoria), this protein is Glutamate 5-kinase.